Here is a 308-residue protein sequence, read N- to C-terminus: Ornithine carbamoyltransferase (308 aa).

Residues 56-59 (STRT), Gln-83, Arg-107, and 134-137 (HPCQ) each bind carbamoyl phosphate. L-ornithine-binding positions include Asn-165, Asp-225, and 229–230 (SM). Residues 264-265 (CL) and Arg-292 each bind carbamoyl phosphate.

The protein belongs to the aspartate/ornithine carbamoyltransferase superfamily. OTCase family.

The protein resides in the cytoplasm. It catalyses the reaction carbamoyl phosphate + L-ornithine = L-citrulline + phosphate + H(+). The protein operates within amino-acid biosynthesis; L-arginine biosynthesis; L-arginine from L-ornithine and carbamoyl phosphate: step 1/3. Reversibly catalyzes the transfer of the carbamoyl group from carbamoyl phosphate (CP) to the N(epsilon) atom of ornithine (ORN) to produce L-citrulline. This Nitrobacter winogradskyi (strain ATCC 25391 / DSM 10237 / CIP 104748 / NCIMB 11846 / Nb-255) protein is Ornithine carbamoyltransferase.